A 320-amino-acid chain; its full sequence is o-succinylbenzoate synthase (320 aa).

The Proton donor role is filled by Lys-133. Mg(2+) contacts are provided by Asp-161, Glu-190, and Asp-213. Lys-235 functions as the Proton acceptor in the catalytic mechanism.

It belongs to the mandelate racemase/muconate lactonizing enzyme family. MenC type 1 subfamily. A divalent metal cation serves as cofactor.

The enzyme catalyses (1R,6R)-6-hydroxy-2-succinyl-cyclohexa-2,4-diene-1-carboxylate = 2-succinylbenzoate + H2O. Its pathway is quinol/quinone metabolism; 1,4-dihydroxy-2-naphthoate biosynthesis; 1,4-dihydroxy-2-naphthoate from chorismate: step 4/7. It participates in quinol/quinone metabolism; menaquinone biosynthesis. Its function is as follows. Converts 2-succinyl-6-hydroxy-2,4-cyclohexadiene-1-carboxylate (SHCHC) to 2-succinylbenzoate (OSB). The polypeptide is o-succinylbenzoate synthase (Escherichia fergusonii (strain ATCC 35469 / DSM 13698 / CCUG 18766 / IAM 14443 / JCM 21226 / LMG 7866 / NBRC 102419 / NCTC 12128 / CDC 0568-73)).